The primary structure comprises 390 residues: Protein DDI1 homolog (390 aa).

D205 is a catalytic residue. Positions 322-344 are disordered; it reads MHAPRHQDPATTATTASNPAAPV. Residues 330–343 show a composition bias toward low complexity; that stretch reads PATTATTASNPAAP.

The protein belongs to the DDI1 family.

Its subcellular location is the cytoplasm. With respect to regulation, inhibited by pepstatin, diazoacetyl-DL-norleucine methyl ester (DAN) and nelfinavir. Inhibited by the proteinase inhibitors lopinavir and ritonavir. Functionally, aspartic protease. The polypeptide is Protein DDI1 homolog (Leishmania major).